We begin with the raw amino-acid sequence, 281 residues long: UPF0500 protein C1orf216 homolog (281 aa).

A compositionally biased stretch (polar residues) spans 1–12; that stretch reads MFTIQKPDTVSH. A disordered region spans residues 1 to 197; it reads MFTIQKPDTV…SSSDSDSISV (197 aa). The span at 45 to 74 shows a compositional bias: basic and acidic residues; it reads TYDKNENWSQDKKGGEEGENKSKSEDEHSS. Low complexity-rich tracts occupy residues 92-102, 147-161, and 169-178; these read STGSEGISLSS, SSSL…VSAS, and PAPTTTPQEN. The span at 179-190 shows a compositional bias: acidic residues; sequence PETEDSDVESSS. A coiled-coil region spans residues 198–257; that stretch reads TLSEAFQSLQDKEKLKEREKEKHHAQLTMYRRLALLRWIRALQQKVRDQQNRLQESFDTI.

Belongs to the UPF0500 family.

The sequence is that of UPF0500 protein C1orf216 homolog from Xenopus laevis (African clawed frog).